We begin with the raw amino-acid sequence, 617 residues long: Estrogen receptor (617 aa).

The interval 1–54 (MSEEQARAEAPAGARQRRRSELEGYSVSLASLKLSPMYPEEEQRTTGGISSTAH) is disordered. The modulating stretch occupies residues 1-186 (MSEEQARAEA…AIGLVKEIRY (186 aa)). NR C4-type zinc fingers lie at residues 187–207 (CSVC…CEGC) and 223–247 (CPAT…LRKC). The nuclear receptor DNA-binding region spans 187-252 (CSVCSDYASG…RLRKCYEVGM (66 aa)). The hinge stretch occupies residues 253-315 (MKGGFRKERG…GGGVADVVCM (63 aa)). A disordered region spans residues 269 to 303 (NRRPSGLKERERGYSKAQSGSDVREALPQDGQSSS). In terms of domain architecture, NR LBD spans 316–552 (SPEQVLLLLL…DLLLEMLDAH (237 aa)). A disordered region spans residues 568 to 617 (VSSSPTTTATTPTTNTTTTTTTTTHHPSNGSTCPADLPSNPPGPGQSPSP). Positions 573–591 (TTTATTPTTNTTTTTTTTT) are enriched in low complexity. Positions 606-617 (SNPPGPGQSPSP) are enriched in pro residues.

Belongs to the nuclear hormone receptor family. NR3 subfamily. In terms of assembly, binds DNA as a homodimer. Can form a heterodimer with ER-beta. Ovary and testis.

It localises to the nucleus. Its function is as follows. The steroid hormones and their receptors are involved in the regulation of eukaryotic gene expression and affect cellular proliferation and differentiation in target tissues. The protein is Estrogen receptor (esr1) of Ictalurus punctatus (Channel catfish).